The sequence spans 745 residues: 5-methyltetrahydropteroyltriglutamate--homocysteine methyltransferase (745 aa).

Residues 19 to 22 (RELK) and Lys-119 each bind 5-methyltetrahydropteroyltri-L-glutamate. Residues 418 to 420 (IGS) and Glu-471 each bind L-homocysteine. Residues 418–420 (IGS) and Glu-471 each bind L-methionine. Residues 502 to 503 (RC) and Trp-548 each bind 5-methyltetrahydropteroyltri-L-glutamate. L-homocysteine is bound at residue Asp-586. Asp-586 provides a ligand contact to L-methionine. Glu-592 is a binding site for 5-methyltetrahydropteroyltri-L-glutamate. The Zn(2+) site is built by His-628, Cys-630, and Glu-652. The active-site Proton donor is the His-681. Cys-713 provides a ligand contact to Zn(2+).

This sequence belongs to the vitamin-B12 independent methionine synthase family. The cofactor is Zn(2+).

The catalysed reaction is 5-methyltetrahydropteroyltri-L-glutamate + L-homocysteine = tetrahydropteroyltri-L-glutamate + L-methionine. It participates in amino-acid biosynthesis; L-methionine biosynthesis via de novo pathway; L-methionine from L-homocysteine (MetE route): step 1/1. Catalyzes the transfer of a methyl group from 5-methyltetrahydrofolate to homocysteine resulting in methionine formation. The protein is 5-methyltetrahydropteroyltriglutamate--homocysteine methyltransferase of Corynebacterium glutamicum (strain R).